A 183-amino-acid chain; its full sequence is Shikimate kinase (183 aa).

15 to 20 (GSGKST) is a binding site for ATP. A Mg(2+)-binding site is contributed by S19. Positions 37, 61, and 85 each coordinate substrate. R123 serves as a coordination point for ATP. R142 lines the substrate pocket.

This sequence belongs to the shikimate kinase family. As to quaternary structure, monomer. It depends on Mg(2+) as a cofactor.

The protein localises to the cytoplasm. The enzyme catalyses shikimate + ATP = 3-phosphoshikimate + ADP + H(+). The protein operates within metabolic intermediate biosynthesis; chorismate biosynthesis; chorismate from D-erythrose 4-phosphate and phosphoenolpyruvate: step 5/7. Functionally, catalyzes the specific phosphorylation of the 3-hydroxyl group of shikimic acid using ATP as a cosubstrate. The protein is Shikimate kinase of Paracidovorax citrulli (strain AAC00-1) (Acidovorax citrulli).